Reading from the N-terminus, the 330-residue chain is Pantothenate synthetase 2 (330 aa).

The Proton donor role is filled by histidine 55. ATP is bound by residues 167–170, valine 196, and 204–207; these read GEKD and ASSR.

It belongs to the pantothenate synthetase family. In terms of assembly, homodimer.

It localises to the cytoplasm. It carries out the reaction (R)-pantoate + beta-alanine + ATP = (R)-pantothenate + AMP + diphosphate + H(+). It participates in cofactor biosynthesis; (R)-pantothenate biosynthesis; (R)-pantothenate from (R)-pantoate and beta-alanine: step 1/1. Catalyzes the condensation of pantoate with beta-alanine in an ATP-dependent reaction via a pantoyl-adenylate intermediate. In Frankia alni (strain DSM 45986 / CECT 9034 / ACN14a), this protein is Pantothenate synthetase 2.